We begin with the raw amino-acid sequence, 37 residues long: MKVRTSVKKICSSCKVIRRKGVIGVICTNPKHKQRQA.

The protein belongs to the bacterial ribosomal protein bL36 family.

The protein is Large ribosomal subunit protein bL36 of Leptospira interrogans serogroup Icterohaemorrhagiae serovar Lai (strain 56601).